A 363-amino-acid polypeptide reads, in one-letter code: Double-strand-specific pac1 ribonuclease (363 aa).

Disordered regions lie at residues 1–35 and 92–138; these read MGRFKRHHEGDSDSSSSASDSLSRGRRSLGHKRSS and SRHD…PPLR. Over residues 13-22 the composition is skewed to low complexity; sequence DSSSSASDSL. Over residues 24–35 the composition is skewed to basic residues; that stretch reads RGRRSLGHKRSS. S122 carries the post-translational modification Phosphoserine. Positions 139 to 262 constitute an RNase III domain; it reads SEKLKEQVFM…YLGALILDGQ (124 aa). The DRBM domain occupies 285–356; that stretch reads RPIDKLAKSK…AMQALEVLAK (72 aa).

Mg(2+) serves as cofactor.

It catalyses the reaction Endonucleolytic cleavage to 5'-phosphomonoester.. Functionally, digests double-stranded RNA. Converts long double-stranded RNAs into short oligonucleotides, leaving 5'-phosphates on their cleavage products. Probably inhibits mating and meiosis by degrading a specific mRNA required for sexual development. This Schizosaccharomyces pombe (strain 972 / ATCC 24843) (Fission yeast) protein is Double-strand-specific pac1 ribonuclease (pac1).